A 217-amino-acid polypeptide reads, in one-letter code: Flagellar L-ring protein 2 (217 aa).

Positions 1–15 are cleaved as a signal peptide; the sequence is MRILLALTWLAWLGA. The N-palmitoyl cysteine moiety is linked to residue cysteine 16. Cysteine 16 carries S-diacylglycerol cysteine lipidation.

Belongs to the FlgH family. As to quaternary structure, the basal body constitutes a major portion of the flagellar organelle and consists of four rings (L,P,S, and M) mounted on a central rod.

It localises to the cell outer membrane. The protein resides in the bacterial flagellum basal body. Its function is as follows. Assembles around the rod to form the L-ring and probably protects the motor/basal body from shearing forces during rotation. The sequence is that of Flagellar L-ring protein 2 from Burkholderia thailandensis (strain ATCC 700388 / DSM 13276 / CCUG 48851 / CIP 106301 / E264).